We begin with the raw amino-acid sequence, 292 residues long: 4-diphosphocytidyl-2-C-methyl-D-erythritol kinase (292 aa).

The active site involves Lys10. Residue 94-104 participates in ATP binding; the sequence is PVAAGLAGGSS. Asp136 is an active-site residue.

Belongs to the GHMP kinase family. IspE subfamily.

The catalysed reaction is 4-CDP-2-C-methyl-D-erythritol + ATP = 4-CDP-2-C-methyl-D-erythritol 2-phosphate + ADP + H(+). It functions in the pathway isoprenoid biosynthesis; isopentenyl diphosphate biosynthesis via DXP pathway; isopentenyl diphosphate from 1-deoxy-D-xylulose 5-phosphate: step 3/6. Its function is as follows. Catalyzes the phosphorylation of the position 2 hydroxy group of 4-diphosphocytidyl-2C-methyl-D-erythritol. The chain is 4-diphosphocytidyl-2-C-methyl-D-erythritol kinase from Brevibacillus brevis (strain 47 / JCM 6285 / NBRC 100599).